The chain runs to 224 residues: ATP synthase subunit a (224 aa).

Transmembrane regions (helical) follow at residues 17-37, 72-92, 99-119, 125-145, 166-186, and 187-207; these read FSLN…IYWL, IFIS…FPYI, LTLT…YGWI, MFAH…MVCI, IAGH…SYIL, and VTFL…VAMI.

The protein belongs to the ATPase A chain family. As to quaternary structure, F-type ATPases have 2 components, CF(1) - the catalytic core - and CF(0) - the membrane proton channel. CF(1) has five subunits: alpha(3), beta(3), gamma(1), delta(1), epsilon(1). CF(0) has three main subunits: a, b and c.

The protein localises to the mitochondrion inner membrane. Its function is as follows. Mitochondrial membrane ATP synthase (F(1)F(0) ATP synthase or Complex V) produces ATP from ADP in the presence of a proton gradient across the membrane which is generated by electron transport complexes of the respiratory chain. F-type ATPases consist of two structural domains, F(1) - containing the extramembraneous catalytic core and F(0) - containing the membrane proton channel, linked together by a central stalk and a peripheral stalk. During catalysis, ATP synthesis in the catalytic domain of F(1) is coupled via a rotary mechanism of the central stalk subunits to proton translocation. Key component of the proton channel; it may play a direct role in the translocation of protons across the membrane. The sequence is that of ATP synthase subunit a (mt:ATPase6) from Drosophila melanogaster (Fruit fly).